A 376-amino-acid polypeptide reads, in one-letter code: Chaperone protein DnaJ (376 aa).

In terms of domain architecture, J spans 4-68 (DYYDILGVDR…DTRSRYDQFG (65 aa)). The segment at 135 to 217 (GGEKEIRIPH…CNGAGRRQVT (83 aa)) adopts a CR-type zinc-finger fold. Zn(2+) contacts are provided by Cys148, Cys151, Cys165, Cys168, Cys191, Cys194, Cys205, and Cys208. CXXCXGXG motif repeat units lie at residues 148 to 155 (CQVCKGDG), 165 to 172 (CSTCNGQG), 191 to 198 (CPACNGQG), and 205 to 212 (CEVCNGAG).

The protein belongs to the DnaJ family. Homodimer. Zn(2+) serves as cofactor.

The protein localises to the cytoplasm. Functionally, participates actively in the response to hyperosmotic and heat shock by preventing the aggregation of stress-denatured proteins and by disaggregating proteins, also in an autonomous, DnaK-independent fashion. Unfolded proteins bind initially to DnaJ; upon interaction with the DnaJ-bound protein, DnaK hydrolyzes its bound ATP, resulting in the formation of a stable complex. GrpE releases ADP from DnaK; ATP binding to DnaK triggers the release of the substrate protein, thus completing the reaction cycle. Several rounds of ATP-dependent interactions between DnaJ, DnaK and GrpE are required for fully efficient folding. Also involved, together with DnaK and GrpE, in the DNA replication of plasmids through activation of initiation proteins. The protein is Chaperone protein DnaJ of Crocosphaera subtropica (strain ATCC 51142 / BH68) (Cyanothece sp. (strain ATCC 51142)).